A 1012-amino-acid polypeptide reads, in one-letter code: MSGDYANYTVLMPPTPDNQPSGGAPPAAPSAGGARPGDLPLPPYGSSSSSRLVNRRGGGDDGAKMDRRLSTARVPAPSSNKSLLVRSQTGDFDHNRWLFETKGTYGIGNAYWPQDNVYGDDGGGGAVKMEDLVEKPWKPLSRKVPIPPGILSPYRLLVLVRFVALFLFLVWRVTNPNMDALWLWGISIVCEFWFAFSWLLDQMPKLNPINRAADLAALKEKFESPSPTNPTGRSDLPGLDVFISTADPYKEPTLVTANTLLSILATEYPVEKLFVYISDDGGALLTFESMAEACAFAKVWVPFCRKHSIEPRNPDSYFTQKGDPTKGKKRPDFVKDRRWIKREYDEFKIRVNSLPDLIRRRANALNARERKLARDKQAAGDADALASVKAATWMADGTHWPGTWLDPSPDHAKGDHASIVQVMIKNPHHDVVYGEAGDHPYLDMTDVDMRIPMFAYLSREKRAGYDHNKKAGAMNAMVRASAILSNGPFMLNFDCDHYIYNCQAIREAMCYMLDRGGDRICYIQFPQRFEGIDPSDRYANHNTVFFDGNMRALDGLQGPMYVGTGCLFRRYAIYGFNPPRAIEYRGTYGQTKVPIDPRQGSEAMPGAGGGRSGGGSVGGDHELQALSTAHPDHEAPQKFGKSKMFIESIAVAEYQGRPLQDHPSVLNGRPPGALLMPRPPLDAATVAESVSVISCWYEDNTEWGQRVGWIYGSVTEDVVTGYRMHNRGWRSVYCITRRDAFRGTAPINLTDRLHQVLRWATGSVEIFFSKNNAVLASRRLKFLQRMAYLNVGIYPFTSLFLIMYCLLPALSLFSGQFIVATLDPTFLSYLLLITITLMLLCLLEVKWSGIGLEEWWRNEQFWVIGGTSAHLAAVLQGLLKVVAGIEISFTLTAKAAAEDDDDPFAELYLIKWTSLFIPPLAVIGINIIALVVGVSRTVYAEIPQYSKLLGGGFFSFWVLAHYYPFAKGLMGRRGRTPTIVYVWAGLISITVSLLWITISPPDDSVAQGGIDV.

The disordered stretch occupies residues 1 to 85 (MSGDYANYTV…APSSNKSLLV (85 aa)). Residues 20–37 (PSGGAPPAAPSAGGARPG) show a composition bias toward low complexity. A compositionally biased stretch (basic and acidic residues) spans 57 to 69 (GGGDDGAKMDRRL). Helical transmembrane passes span 150-170 (ILSP…LFLV) and 180-200 (ALWL…SWLL). Asp280 is an active-site residue. A disordered region spans residues 597 to 620 (PRQGSEAMPGAGGGRSGGGSVGGD). The segment covering 606 to 618 (GAGGGRSGGGSVG) has biased composition (gly residues). Residue Asp717 is part of the active site. The next 6 membrane-spanning stretches (helical) occupy residues 799-819 (LFLI…QFIV), 825-845 (TFLS…LLEV), 871-891 (LAAV…SFTL), 914-934 (SLFI…VVGV), 948-968 (LLGG…FAKG), and 978-998 (TIVY…WITI).

Belongs to the glycosyltransferase 2 family. Plant cellulose synthase-like D subfamily.

The protein localises to the golgi apparatus membrane. Its function is as follows. Thought to be a Golgi-localized beta-glycan synthase that polymerize the backbones of noncellulosic polysaccharides (hemicelluloses) of plant cell wall. The protein is Putative cellulose synthase-like protein D5 (CSLD5) of Oryza sativa subsp. indica (Rice).